The following is a 506-amino-acid chain: MTETTAHPVTTATGTDVRVRFCPSPTGTPHVGLIRTALFNWAYARHTGGKLVFRVEDTDAARDSEESYEQLIEALRWLEIDWDEGEGVGGPHAPYRQSQRTDLYLDVIAKLTASGHLYESFATAEEIEARNRAAGRDPKMGYDNFERDLTEEERQAFRDEGRSPALRLRVPDTDLSFDDLVRGTVTFPAGSFPDFVLVRPNGAPLYTLVNPVDDALMGITHVLRGEDLLSSTPRQIALYHALIDIGVADAIPRFGHLPYVMGEGNKKLSKRDPESNLFHHRDRGFIPEGLINYLALLGWSLTHDRDVFSRMEMVTAFDVADVNPNPARFDLKKAESLNGDHIRLLALDDFAQRLVPYLQAADVVGAELTHDQRRMLEAAAPLVQERMQLLGEAPDLLSFLFTTADELPYDDAAVQALKDDAPEVLAASRGALSGVPHTQWDIDLVQEVLQNTLITGMGMKPRLAYGPLRVGISGRRISPPLFESMVLLGKDETIARLDRLAGMLGE.

A 'HIGH' region motif is present at residues 23–33 (PSPTGTPHVGL). The 'KMSKS' region signature appears at 267–271 (KLSKR). Position 270 (Lys-270) interacts with ATP.

It belongs to the class-I aminoacyl-tRNA synthetase family. Glutamate--tRNA ligase type 1 subfamily. Monomer.

Its subcellular location is the cytoplasm. The catalysed reaction is tRNA(Glu) + L-glutamate + ATP = L-glutamyl-tRNA(Glu) + AMP + diphosphate. Catalyzes the attachment of glutamate to tRNA(Glu) in a two-step reaction: glutamate is first activated by ATP to form Glu-AMP and then transferred to the acceptor end of tRNA(Glu). This chain is Glutamate--tRNA ligase, found in Clavibacter sepedonicus (Clavibacter michiganensis subsp. sepedonicus).